The chain runs to 591 residues: Aspartate--tRNA(Asp/Asn) ligase (591 aa).

L-aspartate is bound at residue Glu-175. Residues Gln-199–Lys-202 form an aspartate region. L-aspartate contacts are provided by Arg-221 and His-453. Arg-221–Glu-223 provides a ligand contact to ATP. Glu-486 serves as a coordination point for ATP. Arg-493 is an L-aspartate binding site. ATP is bound at residue Gly-538–Arg-541.

Belongs to the class-II aminoacyl-tRNA synthetase family. Type 1 subfamily. As to quaternary structure, homodimer.

The protein localises to the cytoplasm. It catalyses the reaction tRNA(Asx) + L-aspartate + ATP = L-aspartyl-tRNA(Asx) + AMP + diphosphate. In terms of biological role, aspartyl-tRNA synthetase with relaxed tRNA specificity since it is able to aspartylate not only its cognate tRNA(Asp) but also tRNA(Asn). Reaction proceeds in two steps: L-aspartate is first activated by ATP to form Asp-AMP and then transferred to the acceptor end of tRNA(Asp/Asn). The sequence is that of Aspartate--tRNA(Asp/Asn) ligase from Cereibacter sphaeroides (strain KD131 / KCTC 12085) (Rhodobacter sphaeroides).